The following is a 333-amino-acid chain: Tetraacyldisaccharide 4'-kinase (333 aa).

60-67 (TVGGTGKT) contacts ATP.

This sequence belongs to the LpxK family.

The catalysed reaction is a lipid A disaccharide + ATP = a lipid IVA + ADP + H(+). Its pathway is glycolipid biosynthesis; lipid IV(A) biosynthesis; lipid IV(A) from (3R)-3-hydroxytetradecanoyl-[acyl-carrier-protein] and UDP-N-acetyl-alpha-D-glucosamine: step 6/6. In terms of biological role, transfers the gamma-phosphate of ATP to the 4'-position of a tetraacyldisaccharide 1-phosphate intermediate (termed DS-1-P) to form tetraacyldisaccharide 1,4'-bis-phosphate (lipid IVA). The chain is Tetraacyldisaccharide 4'-kinase from Pseudomonas putida (strain ATCC 700007 / DSM 6899 / JCM 31910 / BCRC 17059 / LMG 24140 / F1).